Consider the following 340-residue polypeptide: Beta-ketoacyl-[acyl-carrier-protein] synthase III (340 aa).

Residues cysteine 119 and histidine 260 contribute to the active site. Residues 261-265 (QANYR) form an ACP-binding region. Residue asparagine 290 is part of the active site.

It belongs to the thiolase-like superfamily. FabH family. Homodimer.

The protein localises to the cytoplasm. It carries out the reaction malonyl-[ACP] + acetyl-CoA + H(+) = 3-oxobutanoyl-[ACP] + CO2 + CoA. It functions in the pathway lipid metabolism; fatty acid biosynthesis. Functionally, catalyzes the condensation reaction of fatty acid synthesis by the addition to an acyl acceptor of two carbons from malonyl-ACP. Catalyzes the first condensation reaction which initiates fatty acid synthesis and may therefore play a role in governing the total rate of fatty acid production. Possesses both acetoacetyl-ACP synthase and acetyl transacylase activities. Its substrate specificity determines the biosynthesis of branched-chain and/or straight-chain of fatty acids. This chain is Beta-ketoacyl-[acyl-carrier-protein] synthase III, found in Sulfurovum sp. (strain NBC37-1).